Here is a 422-residue protein sequence, read N- to C-terminus: Tryptophan synthase beta chain 1 (422 aa).

Lys107 is modified (N6-(pyridoxal phosphate)lysine).

It belongs to the TrpB family. As to quaternary structure, tetramer of two alpha and two beta chains. The cofactor is pyridoxal 5'-phosphate.

It carries out the reaction (1S,2R)-1-C-(indol-3-yl)glycerol 3-phosphate + L-serine = D-glyceraldehyde 3-phosphate + L-tryptophan + H2O. Its pathway is amino-acid biosynthesis; L-tryptophan biosynthesis; L-tryptophan from chorismate: step 5/5. Its function is as follows. The beta subunit is responsible for the synthesis of L-tryptophan from indole and L-serine. This chain is Tryptophan synthase beta chain 1 (trpB1), found in Sulfurisphaera tokodaii (strain DSM 16993 / JCM 10545 / NBRC 100140 / 7) (Sulfolobus tokodaii).